The primary structure comprises 208 residues: Effector protein MavE (208 aa).

The short motif at Asn-77–Tyr-80 is the NPxY eukaryotic motif element. The helical transmembrane segment at Val-184–Phe-204 threads the bilayer.

As to quaternary structure, homotrimer.

It localises to the secreted. The protein localises to the host vacuole. The protein resides in the host pathogen-containing vacuole. Its subcellular location is the host pathogen-containing vacuole membrane. Functionally, virulence effector that is indispensable for endoplasmic reticulum (ER)-mediated remodeling of the Legionella pneumophila-containing vacuole (LCV) and lysosomal evasion. Essential for intracellular replication in human monocyte-derived macrophages (hMDMs) and amoebae, as well as for intrapulmonary proliferation in mice. This chain is Effector protein MavE, found in Legionella pneumophila subsp. pneumophila (strain Philadelphia 1 / ATCC 33152 / DSM 7513).